Consider the following 266-residue polypeptide: 4-hydroxy-tetrahydrodipicolinate reductase (266 aa).

Residue 10–15 (GPRGRM) coordinates NAD(+). Lysine 38 contacts NADP(+). NAD(+)-binding positions include 99–101 (GTT) and 125–128 (APNF). Residue histidine 155 is the Proton donor/acceptor of the active site. Residue histidine 156 coordinates (S)-2,3,4,5-tetrahydrodipicolinate. Catalysis depends on lysine 159, which acts as the Proton donor. 165 to 166 (GT) lines the (S)-2,3,4,5-tetrahydrodipicolinate pocket.

The protein belongs to the DapB family.

It is found in the cytoplasm. The enzyme catalyses (S)-2,3,4,5-tetrahydrodipicolinate + NAD(+) + H2O = (2S,4S)-4-hydroxy-2,3,4,5-tetrahydrodipicolinate + NADH + H(+). It carries out the reaction (S)-2,3,4,5-tetrahydrodipicolinate + NADP(+) + H2O = (2S,4S)-4-hydroxy-2,3,4,5-tetrahydrodipicolinate + NADPH + H(+). It participates in amino-acid biosynthesis; L-lysine biosynthesis via DAP pathway; (S)-tetrahydrodipicolinate from L-aspartate: step 4/4. Catalyzes the conversion of 4-hydroxy-tetrahydrodipicolinate (HTPA) to tetrahydrodipicolinate. The chain is 4-hydroxy-tetrahydrodipicolinate reductase from Bacillus cereus (strain ATCC 10987 / NRS 248).